The chain runs to 219 residues: Ribose-5-phosphate isomerase A (219 aa).

Substrate is bound by residues 28-31 (TGST), 81-84 (DGAD), and 94-97 (KGGG). The active-site Proton acceptor is Glu-103. Position 121 (Lys-121) interacts with substrate.

This sequence belongs to the ribose 5-phosphate isomerase family. As to quaternary structure, homodimer.

The enzyme catalyses aldehydo-D-ribose 5-phosphate = D-ribulose 5-phosphate. It participates in carbohydrate degradation; pentose phosphate pathway; D-ribose 5-phosphate from D-ribulose 5-phosphate (non-oxidative stage): step 1/1. Functionally, catalyzes the reversible conversion of ribose-5-phosphate to ribulose 5-phosphate. The protein is Ribose-5-phosphate isomerase A of Shewanella oneidensis (strain ATCC 700550 / JCM 31522 / CIP 106686 / LMG 19005 / NCIMB 14063 / MR-1).